The primary structure comprises 106 residues: Phosphoribosyl-ATP pyrophosphatase (106 aa).

The protein belongs to the PRA-PH family.

The protein resides in the cytoplasm. The enzyme catalyses 1-(5-phospho-beta-D-ribosyl)-ATP + H2O = 1-(5-phospho-beta-D-ribosyl)-5'-AMP + diphosphate + H(+). It functions in the pathway amino-acid biosynthesis; L-histidine biosynthesis; L-histidine from 5-phospho-alpha-D-ribose 1-diphosphate: step 2/9. The polypeptide is Phosphoribosyl-ATP pyrophosphatase (Methylobacillus flagellatus (strain ATCC 51484 / DSM 6875 / VKM B-1610 / KT)).